The sequence spans 698 residues: DNA-directed RNA polymerase subunit beta' (698 aa).

Zn(2+) contacts are provided by cysteine 69, cysteine 71, cysteine 89, and cysteine 92. Residues aspartate 509, aspartate 511, and aspartate 513 each contribute to the Mg(2+) site.

This sequence belongs to the RNA polymerase beta' chain family. RpoC1 subfamily. As to quaternary structure, in plastids the minimal PEP RNA polymerase catalytic core is composed of four subunits: alpha, beta, beta', and beta''. When a (nuclear-encoded) sigma factor is associated with the core the holoenzyme is formed, which can initiate transcription. It depends on Mg(2+) as a cofactor. Requires Zn(2+) as cofactor.

The protein resides in the plastid. It is found in the chloroplast. It catalyses the reaction RNA(n) + a ribonucleoside 5'-triphosphate = RNA(n+1) + diphosphate. Its function is as follows. DNA-dependent RNA polymerase catalyzes the transcription of DNA into RNA using the four ribonucleoside triphosphates as substrates. The sequence is that of DNA-directed RNA polymerase subunit beta' from Cryptomeria japonica (Japanese cedar).